Reading from the N-terminus, the 256-residue chain is Cilia- and flagella-associated protein 410 (256 aa).

LRR repeat units lie at residues S19–P40, S41–Q62, and R63–K84. An LRRCT domain is found at N97–E137. 2 disordered regions span residues E129–K156 and A168–R212. 2 positions are modified to phosphoserine: S136 and S177.

Found in a complex with CFAP410, NEK1 and SPATA7. Interacts with NEK1. As to expression, widely expressed. Expressed in the retina.

It localises to the mitochondrion. Its subcellular location is the cytoplasm. The protein localises to the cytoskeleton. The protein resides in the cilium basal body. It is found in the cell projection. It localises to the cilium. Its subcellular location is the photoreceptor outer segment. Its function is as follows. Plays a role in cilia formation and/or maintenance. Plays a role in the regulation of cell morphology and cytoskeletal organization. Involved in DNA damage repair. This chain is Cilia- and flagella-associated protein 410, found in Homo sapiens (Human).